Reading from the N-terminus, the 286-residue chain is Bifunctional protein FolD (286 aa).

NADP(+)-binding positions include 165-167, Ser-190, and Val-231; that span reads GRS.

Belongs to the tetrahydrofolate dehydrogenase/cyclohydrolase family. As to quaternary structure, homodimer.

The enzyme catalyses (6R)-5,10-methylene-5,6,7,8-tetrahydrofolate + NADP(+) = (6R)-5,10-methenyltetrahydrofolate + NADPH. It catalyses the reaction (6R)-5,10-methenyltetrahydrofolate + H2O = (6R)-10-formyltetrahydrofolate + H(+). It functions in the pathway one-carbon metabolism; tetrahydrofolate interconversion. In terms of biological role, catalyzes the oxidation of 5,10-methylenetetrahydrofolate to 5,10-methenyltetrahydrofolate and then the hydrolysis of 5,10-methenyltetrahydrofolate to 10-formyltetrahydrofolate. This chain is Bifunctional protein FolD, found in Bacillus mycoides (strain KBAB4) (Bacillus weihenstephanensis).